The primary structure comprises 727 residues: 1,4-alpha-glucan branching enzyme GlgB (727 aa).

Aspartate 405 functions as the Nucleophile in the catalytic mechanism. The Proton donor role is filled by glutamate 458.

Belongs to the glycosyl hydrolase 13 family. GlgB subfamily. As to quaternary structure, monomer.

It catalyses the reaction Transfers a segment of a (1-&gt;4)-alpha-D-glucan chain to a primary hydroxy group in a similar glucan chain.. It functions in the pathway glycan biosynthesis; glycogen biosynthesis. Catalyzes the formation of the alpha-1,6-glucosidic linkages in glycogen by scission of a 1,4-alpha-linked oligosaccharide from growing alpha-1,4-glucan chains and the subsequent attachment of the oligosaccharide to the alpha-1,6 position. This is 1,4-alpha-glucan branching enzyme GlgB from Yersinia enterocolitica serotype O:8 / biotype 1B (strain NCTC 13174 / 8081).